We begin with the raw amino-acid sequence, 367 residues long: GDSL esterase/lipase 3 (367 aa).

An N-terminal signal peptide occupies residues M1–C23. The Nucleophile role is filled by S42. N-linked (GlcNAc...) asparagine glycans are attached at residues N175, N194, and N321. Active-site residues include D329 and H332. N-linked (GlcNAc...) asparagine glycosylation occurs at N351.

Belongs to the 'GDSL' lipolytic enzyme family.

It localises to the secreted. This Arabidopsis thaliana (Mouse-ear cress) protein is GDSL esterase/lipase 3 (GLIP3).